A 257-amino-acid chain; its full sequence is Acetylglutamate kinase (257 aa).

Residues 43 to 44 (GG), R65, and N157 contribute to the substrate site. ATP is bound by residues 180-185 (DVSGIL) and 208-210 (IIT).

Belongs to the acetylglutamate kinase family. ArgB subfamily. As to quaternary structure, homodimer.

The protein resides in the cytoplasm. It carries out the reaction N-acetyl-L-glutamate + ATP = N-acetyl-L-glutamyl 5-phosphate + ADP. Its pathway is amino-acid biosynthesis; L-arginine biosynthesis; N(2)-acetyl-L-ornithine from L-glutamate: step 2/4. Functionally, catalyzes the ATP-dependent phosphorylation of N-acetyl-L-glutamate. This chain is Acetylglutamate kinase, found in Enterobacter sp. (strain 638).